Here is a 225-residue protein sequence, read N- to C-terminus: Polyadenylate-binding protein 2 (225 aa).

Over residues 1–36 (MADEDISLNEDQLLESMEETNGEQETEIVTETEEEG) the composition is skewed to acidic residues. Residues 1-42 (MADEDISLNEDQLLESMEETNGEQETEIVTETEEEGSMQIDP) are disordered. Residues 14 to 74 (LESMEETNGE…QSEVDKQMAG (61 aa)) adopt a coiled-coil conformation. The region spanning 96-173 (RSVYVGNVDY…RQIKVMSKRT (78 aa)) is the RRM domain.

The protein resides in the nucleus. The protein localises to the cytoplasm. Involved in the 3'-end formation of mRNA precursors (pre-mRNA) by the addition of a poly(A) tail of 200-250 nt to the upstream cleavage product. Stimulates poly(A) polymerase (PAPOLA) conferring processivity on the poly(A) tail elongation reaction and also controls the poly(A) tail length. Increases the affinity of poly(A) polymerase for RNA. Binds to poly(A) and to poly(G) with high affinity. May protect the poly(A) tail from degradation. This Drosophila pseudoobscura pseudoobscura (Fruit fly) protein is Polyadenylate-binding protein 2.